Here is a 284-residue protein sequence, read N- to C-terminus: Protease HtpX (284 aa).

2 helical membrane passes run 4-24 and 33-53; these read ILLF…ILSL and MGLL…SLLM. His-139 is a binding site for Zn(2+). Residue Glu-140 is part of the active site. His-143 provides a ligand contact to Zn(2+). Transmembrane regions (helical) follow at residues 147 to 167 and 187 to 207; these read GDMV…IFAA and IYFL…SMIA. Glu-215 provides a ligand contact to Zn(2+).

The protein belongs to the peptidase M48B family. It depends on Zn(2+) as a cofactor.

Its subcellular location is the cell inner membrane. This is Protease HtpX from Mannheimia succiniciproducens (strain KCTC 0769BP / MBEL55E).